We begin with the raw amino-acid sequence, 191 residues long: Phosphoheptose isomerase (191 aa).

Residues 34-191 enclose the SIS domain; it reads IATALKDGNK…LVEEMVCERS (158 aa). 49-51 is a binding site for substrate; that stretch reads NGG. Zn(2+) is bound by residues H58 and E62. Residues E62, 91 to 92, 117 to 119, S122, and Q169 each bind substrate; these read ND and TTS. Q169 and H177 together coordinate Zn(2+).

This sequence belongs to the SIS family. GmhA subfamily. Requires Zn(2+) as cofactor.

It is found in the cytoplasm. It catalyses the reaction 2 D-sedoheptulose 7-phosphate = D-glycero-alpha-D-manno-heptose 7-phosphate + D-glycero-beta-D-manno-heptose 7-phosphate. The protein operates within carbohydrate biosynthesis; D-glycero-D-manno-heptose 7-phosphate biosynthesis; D-glycero-alpha-D-manno-heptose 7-phosphate and D-glycero-beta-D-manno-heptose 7-phosphate from sedoheptulose 7-phosphate: step 1/1. Functionally, catalyzes the isomerization of sedoheptulose 7-phosphate in D-glycero-D-manno-heptose 7-phosphate. The polypeptide is Phosphoheptose isomerase (Aquifex aeolicus (strain VF5)).